We begin with the raw amino-acid sequence, 360 residues long: Cyclin-Y-like protein 2 (360 aa).

Residues 204–286 (RLTAEFAIVS…FLKLINYNIG (83 aa)) enclose the Cyclin N-terminal domain.

Belongs to the cyclin family. Cyclin Y subfamily.

The polypeptide is Cyclin-Y-like protein 2 (CCNYL2) (Macaca fascicularis (Crab-eating macaque)).